The chain runs to 113 residues: UPF0145 protein SynWH7803_1684 (113 aa).

Belongs to the UPF0145 family.

This chain is UPF0145 protein SynWH7803_1684, found in Synechococcus sp. (strain WH7803).